Reading from the N-terminus, the 105-residue chain is Heat shock protein HspQ (105 aa).

This sequence belongs to the HspQ family.

The protein resides in the cytoplasm. Its function is as follows. Involved in the degradation of certain denaturated proteins, including DnaA, during heat shock stress. This Klebsiella pneumoniae (strain 342) protein is Heat shock protein HspQ.